We begin with the raw amino-acid sequence, 756 residues long: MTPQAFTATVVGSPRIGPKRELKRATEGYWAGRTGRAELEKVAATLRRDTWAGLAAAGLDSVPVNTFSYYDQMLDTAVMLDALPERARQVSDDLDRYFAAARGNSDVAPLEMTKWFDTNYHYIVPEIAPTTKFALNPDKVLSELKEALAQGIPARPVVIGPITFLLLSKGVDGAGAPIERLEELVPIYAELLSLLADNGAQWVQLDEPALVTDMCADAPALAEAVYNKLGSASNRPAIYVATYFGDPGASLAGLARTPVEAIGVDLVYGPDTAVAAVPELAGKTVVAGVVDGRNVWRTDLAAALDKLTTLLGSAARVAVSTSCSTLHVPYSLEPETDLDDALRSWLAFGREKVAEVVTLARALRDGREAVADEIAASNAAVASRKSDPRLHNDRVRARIDSIVASGSHRGDPAQRRASQDARLHLPPLPTTTIGSYPQTSAIRKARAALRSGEIDQAEYERRMKKEIADVITLQEQLGLDVLVHGEPERNDMVQYFAEQLEGFFATQNGWVQSYGSRCVRPPILYGDVVRTHPMTVEWISYAQSLTDKPVKGMLTGPVTILAWSFVRDDQPLADTANQVALAIRDETVDLQAAGIAVIQVDEPALRELLPLRRADQDEYLRWAVGAFRLATSGVADSTQIHTHLCYSEFGEVIGAIADLDADVTSLEAARSHMEVLDDLNAVGFSNSVGPGVYDIHSPRVPSTAEIAESLRAALRAVPAERLWVNPDCGLKTRNPDEVSASLKNMVAAAHEVRAGV.

5-methyltetrahydropteroyltri-L-glutamate-binding positions include 20 to 23 (RELK) and K114. Residues 433 to 435 (IGS) and E486 each bind L-homocysteine. Residues 433 to 435 (IGS) and E486 contribute to the L-methionine site. 5-methyltetrahydropteroyltri-L-glutamate contacts are provided by residues 517-518 (RC) and W563. D601 lines the L-homocysteine pocket. An L-methionine-binding site is contributed by D601. E607 serves as a coordination point for 5-methyltetrahydropteroyltri-L-glutamate. Positions 643, 645, and 667 each coordinate Zn(2+). H696 serves as the catalytic Proton donor. Position 728 (C728) interacts with Zn(2+).

The protein belongs to the vitamin-B12 independent methionine synthase family. Zn(2+) serves as cofactor.

It catalyses the reaction 5-methyltetrahydropteroyltri-L-glutamate + L-homocysteine = tetrahydropteroyltri-L-glutamate + L-methionine. Its pathway is amino-acid biosynthesis; L-methionine biosynthesis via de novo pathway; L-methionine from L-homocysteine (MetE route): step 1/1. Its function is as follows. Catalyzes the transfer of a methyl group from 5-methyltetrahydrofolate to homocysteine resulting in methionine formation. The sequence is that of 5-methyltetrahydropteroyltriglutamate--homocysteine methyltransferase from Mycolicibacterium paratuberculosis (strain ATCC BAA-968 / K-10) (Mycobacterium paratuberculosis).